The sequence spans 209 residues: Protein-L-isoaspartate O-methyltransferase (209 aa).

Residue Ser60 is part of the active site.

Belongs to the methyltransferase superfamily. L-isoaspartyl/D-aspartyl protein methyltransferase family.

It localises to the cytoplasm. It carries out the reaction [protein]-L-isoaspartate + S-adenosyl-L-methionine = [protein]-L-isoaspartate alpha-methyl ester + S-adenosyl-L-homocysteine. Functionally, catalyzes the methyl esterification of L-isoaspartyl residues in peptides and proteins that result from spontaneous decomposition of normal L-aspartyl and L-asparaginyl residues. It plays a role in the repair and/or degradation of damaged proteins. The polypeptide is Protein-L-isoaspartate O-methyltransferase (Methanococcus vannielii (strain ATCC 35089 / DSM 1224 / JCM 13029 / OCM 148 / SB)).